The primary structure comprises 417 residues: D-amino acid dehydrogenase (417 aa).

3 to 17 (VVILGSGVVGVSTAW) lines the FAD pocket.

Belongs to the DadA oxidoreductase family. FAD is required as a cofactor.

It catalyses the reaction a D-alpha-amino acid + A + H2O = a 2-oxocarboxylate + AH2 + NH4(+). It functions in the pathway amino-acid degradation; D-alanine degradation; NH(3) and pyruvate from D-alanine: step 1/1. Its function is as follows. Oxidative deamination of D-amino acids. The chain is D-amino acid dehydrogenase from Pectobacterium atrosepticum (strain SCRI 1043 / ATCC BAA-672) (Erwinia carotovora subsp. atroseptica).